Reading from the N-terminus, the 170-residue chain is Calcineurin subunit B type 1 (170 aa).

Gly-2 is lipidated: N-myristoyl glycine. EF-hand domains lie at 18–46, 50–85, 87–122, and 128–163; these read DEIK…FMSL, QQNP…FSVK, DKEQ…MVGN, and QLQQ…LDIH. Residues Asp-31, Asp-33, Ser-35, Ser-37, Glu-42, Asp-63, Asp-65, Asn-67, Glu-69, Glu-74, Asp-100, Asp-102, Asp-104, Tyr-106, and Glu-111 each coordinate Ca(2+). Tyr-106 carries the phosphotyrosine modification. The segment at 131 to 136 is calcineurin A binding; sequence QIVDKT. 5 residues coordinate Ca(2+): Asp-141, Asp-143, Asp-145, Arg-147, and Glu-152.

This sequence belongs to the calcineurin regulatory subunit family. Forms a complex composed of a calmodulin-dependent catalytic subunit (also known as calcineurin A) and a regulatory Ca(2+)-binding subunit (also known as calcineurin B). There are three catalytic subunits, each encoded by a separate gene (PPP3CA, PPP3CB, and PPP3CC) and two regulatory subunits which are also encoded by separate genes (PPP3R1 and PPP3R2). The interaction between the 2 subunits is Ca(2+)-independent. Interacts with catalytic subunit PPP3CA/calcineurin A. Interacts with catalytic subunit PPP3CB/calcineurin A. Interacts with CIB1 (via C-terminal region); the interaction increases upon cardiomyocyte hypertrophy. Interacts with RCAN1. Interacts with SPATA33 (via PQIIIT motif).

It localises to the cytoplasm. The protein resides in the cytosol. Its subcellular location is the cell membrane. It is found in the sarcolemma. Functionally, regulatory subunit of calcineurin, a calcium-dependent, calmodulin stimulated protein phosphatase. Confers calcium sensitivity. The chain is Calcineurin subunit B type 1 (PPP3R1) from Bos taurus (Bovine).